Consider the following 190-residue polypeptide: dCTP deaminase (190 aa).

Residue 113–118 coordinates dCTP; the sequence is KSTYAR. Glutamate 139 serves as the catalytic Proton donor/acceptor. Glutamine 158, tyrosine 172, lysine 181, and glutamine 182 together coordinate dCTP.

It belongs to the dCTP deaminase family. Homotrimer.

The enzyme catalyses dCTP + H2O + H(+) = dUTP + NH4(+). Its pathway is pyrimidine metabolism; dUMP biosynthesis; dUMP from dCTP (dUTP route): step 1/2. Catalyzes the deamination of dCTP to dUTP. The polypeptide is dCTP deaminase (Chlamydia felis (strain Fe/C-56) (Chlamydophila felis)).